The following is a 707-amino-acid chain: Polyribonucleotide nucleotidyltransferase (707 aa).

Asp485 and Asp491 together coordinate Mg(2+). The KH domain occupies 552–615; it reads PRITVINIPK…AAIKWIKGIV (64 aa). Residues 621–689 enclose the S1 motif domain; that stretch reads GEIYEGKVVK…DRGKVKLSMK (69 aa).

It belongs to the polyribonucleotide nucleotidyltransferase family. Requires Mg(2+) as cofactor.

It is found in the cytoplasm. The catalysed reaction is RNA(n+1) + phosphate = RNA(n) + a ribonucleoside 5'-diphosphate. In terms of biological role, involved in mRNA degradation. Catalyzes the phosphorolysis of single-stranded polyribonucleotides processively in the 3'- to 5'-direction. This is Polyribonucleotide nucleotidyltransferase from Rhodospirillum centenum (strain ATCC 51521 / SW).